The primary structure comprises 496 residues: Membrane-bound lytic murein transglycosylase F (496 aa).

The N-terminal stretch at 1–31 (MPIFSTRVLTYLRCIFRLFIGLMLLLTLVGC) is a signal peptide. The non-LT domain stretch occupies residues 32-271 (DFYTPSSQLE…KLDEKYFGHV (240 aa)). The segment at 273 to 496 (NFDFVDTRTF…AEVVKQITLR (224 aa)) is LT domain. The active site involves Glu316. The disordered stretch occupies residues 464–485 (HRREELDEDDSSEPQSTERPTV).

This sequence in the N-terminal section; belongs to the bacterial solute-binding protein 3 family. In the C-terminal section; belongs to the transglycosylase Slt family.

It localises to the cell outer membrane. The enzyme catalyses Exolytic cleavage of the (1-&gt;4)-beta-glycosidic linkage between N-acetylmuramic acid (MurNAc) and N-acetylglucosamine (GlcNAc) residues in peptidoglycan, from either the reducing or the non-reducing ends of the peptidoglycan chains, with concomitant formation of a 1,6-anhydrobond in the MurNAc residue.. Its function is as follows. Murein-degrading enzyme that degrades murein glycan strands and insoluble, high-molecular weight murein sacculi, with the concomitant formation of a 1,6-anhydromuramoyl product. Lytic transglycosylases (LTs) play an integral role in the metabolism of the peptidoglycan (PG) sacculus. Their lytic action creates space within the PG sacculus to allow for its expansion as well as for the insertion of various structures such as secretion systems and flagella. The polypeptide is Membrane-bound lytic murein transglycosylase F (Aeromonas salmonicida (strain A449)).